The chain runs to 417 residues: mRNA export factor ICP27 homolog (417 aa).

Positions 1 to 28 (MEDIIEGGISSDDDFDSSDSSSDEEESD) are enriched in acidic residues. Residues 1–143 (MEDIIEGGIS…NGPLRNGPPR (143 aa)) are disordered. Positions 64-120 (RQRSPITWEHQSPLSRVYRSPSPMRFGKRPRISSNSTSRSCKTSWADRVREAAAQRR) are interaction with RNA. The Nuclear localization signal motif lies at 88–94 (RFGKRPR). Positions 96–107 (SSNSTSRSCKTS) are enriched in low complexity. Residues 106–120 (TSWADRVREAAAQRR) form an interaction with host ALYREF or mouse ALYREF2 region. Positions 108–117 (WADRVREAAA) are enriched in basic and acidic residues. The Nuclear localization signal motif lies at 118–127 (QRRPSRPFRK). The span at 120 to 130 (RPSRPFRKPYS) shows a compositional bias: basic residues. Positions 132–141 (PRNGPLRNGP) are enriched in low complexity. Zn(2+) contacts are provided by C295, H385, C389, and C394. Residues 295–394 (CLMQTTPQDH…HLNKCPSSTC (100 aa)) form a CHC2-type zinc finger.

Belongs to the HHV-1 ICP27 protein family. Homodimer. Homodimerization is required for transactivation. Interacts with host ALYREF and with mouse ALYREF2. Associates in a complex with RNA, and host export factors NXF1/TAP and ALYREF or ALYREF2; these interactions allow nuclear export of viral transcripts.

The protein resides in the host cytoplasm. It is found in the host nucleus. Its function is as follows. Probably acts as a viral splicing factor that regulates viral RNA splicing. Functions as a multifunctional regulator of the expression of viral lytic genes. Early protein that promotes the accumulation and nuclear export of viral intronless RNA transcripts by interacting with mRNAs and cellular export proteins. The chain is mRNA export factor ICP27 homolog (EJRF1) from Saimiriine herpesvirus 2 (strain 11) (SaHV-2).